The primary structure comprises 206 residues: N-(5'-phosphoribosyl)anthranilate isomerase (206 aa).

The protein belongs to the TrpF family.

It catalyses the reaction N-(5-phospho-beta-D-ribosyl)anthranilate = 1-(2-carboxyphenylamino)-1-deoxy-D-ribulose 5-phosphate. Its pathway is amino-acid biosynthesis; L-tryptophan biosynthesis; L-tryptophan from chorismate: step 3/5. The protein is N-(5'-phosphoribosyl)anthranilate isomerase of Pseudomonas syringae pv. syringae (strain B728a).